The following is a 460-amino-acid chain: Argininosuccinate lyase (460 aa).

The protein belongs to the lyase 1 family. Argininosuccinate lyase subfamily.

The protein resides in the cytoplasm. It catalyses the reaction 2-(N(omega)-L-arginino)succinate = fumarate + L-arginine. It participates in amino-acid biosynthesis; L-arginine biosynthesis; L-arginine from L-ornithine and carbamoyl phosphate: step 3/3. In Edwardsiella ictaluri (strain 93-146), this protein is Argininosuccinate lyase.